A 1404-amino-acid chain; its full sequence is MDPVTQAPAPEGVDAPEIDESLQPFEINLYLPKRPLIPSAAASANGLPETPSPLKVAVTPQETLNDLRVTITDSPEGYWLGAFCFRKPLASPNSTAKGGKVQLGERVPEWTELREIFEGVDKDKRELHVTHVPFNEADARAHVQRLRDLLSGGAADPSAIGVDAALSVQDAVRNPQEWQQDAARQNANGRAVTKKGVNDAAEASSELPLPLVDWAGWPSVTSIDLIPQVARRPRQLPVCVRQLSLASWNPPPQHCKLNGHLLYLQVGTLEGEVIFVTASTHGFYVNRSSGARFDPSPRPDGQDFASCSLFDLLCGFSPLFLSSFSKLFNDPLSSRDYFSAVPVTNALPAFPWLARNHTHHADALRSQAAFLLTGATSADALEGTRDWNDELQSARELPRTTLSERLMRDRVLNRIYSEFTQAAARAIPKVAAGEVQAMNPMDKRDAQMFIVNNLFISKGADGVDLYPHMGGDEAAHVAVGKDVQGVKTLNSLDVGGLCLLGTIVVDWKGERWVAQSVVPGLFRRRDDADELPEADGETTELAEAAPEKKSPEAKLAQSNKADLNDDTQVVYGGVEGPEVIRDNAAFHKLFHQVAQTLHLNEHQVEDAKGIKHSLWLSVDSKGLRGADGRRYVLDLARLNPVDINWLENDIDGAIHGSSSSPNQDAHYPHRMTLLRPELLEIYWDSEFRKWARAKLAARQEAKAAKDAKAKEAASKEDGEKTEAPEVEAEEPERLDSSEFKLTFNPDAFVEFKVADTLAEEHSKVITPITDESDASIAAVRQASDFLRKVAIPRFVTDVAAGLFTAADGGALSRQMHARGINVRYLGYVARLCSPEAKQELDQELIQKAGPGHEGFLNAFRLTVLQEMVLRASKRVLRGLIRDVEQVNVAACVSHFLNCLVGDKVNAHPKARPSVTPLSDVADAAWTKLTPETLREELKAEIRKRFRFELPASFFEQELRRAQLLREVALRTGIQLQLQEYVLEGKLADADGVVSDGCHGESQTNGNTTNKKNSKGKKKGGNEQQNGVKKSNVGAAAAKPTKAARATSFEPEDVLNLVPMVKDSTPKSTLAEEAFEAGRISISRGDRELGLELLLEGVSFHEQVYGLVHPEVARCYALFATIVHHLAGVAAMERAESINQAKSENKEITEADLPVVNEHLSMANAVRYQRQAVTVSERTLGLDHPETLNQYMNLAVLERSAGNTRESLLCQRRVLELWSLLHGQHHPDCINALSNVALTLQNARLFEASLRVYRSAHELALTLFGADSIHTANLAHELSQAYTLAGDLKTALAVEKEAWRVFEERLGKDDAQTKESEAFCSSLAASAVRVAKLEKEASERQARLPASRRGNSNAGGGAAAITGAGTTASGNGTANKSLDEIVRFIQGGSNGSVAKAKGKSKASRK.

Positions 357-646 constitute a Clu domain; that stretch reads HTHHADALRS…RLNPVDINWL (290 aa). Residues 528 to 540 show a composition bias toward acidic residues; the sequence is ADELPEADGETTE. 4 disordered regions span residues 528–561, 706–735, 996–1046, and 1337–1372; these read ADELPEADGETTELAEAAPEKKSPEAKLAQSNKA, DAKAKEAASKEDGEKTEAPEVEAEEPERLD, GCHG…ARAT, and SERQARLPASRRGNSNAGGGAAAITGAGTTASGNGT. The segment covering 706-723 has biased composition (basic and acidic residues); that stretch reads DAKAKEAASKEDGEKTEA. Low complexity-rich tracts occupy residues 1021–1046 and 1358–1372; these read NEQQNGVKKSNVGAAAAKPTKAARAT and AAITGAGTTASGNGT.

This sequence belongs to the CLU family. As to quaternary structure, may associate with the eukaryotic translation initiation factor 3 (eIF-3) complex.

It is found in the cytoplasm. MRNA-binding protein involved in proper cytoplasmic distribution of mitochondria. The chain is Clustered mitochondria protein homolog from Mycosarcoma maydis (Corn smut fungus).